We begin with the raw amino-acid sequence, 161 residues long: Vitamin K-dependent protein C (161 aa).

In terms of domain architecture, Peptidase S1 spans 1 to 161 (EKWELDLDIE…GCGLLHNYGV (161 aa)). The N-linked (GlcNAc...) asparagine glycan is linked to Asn17. Asp26 (charge relay system) is an active-site residue. An N-linked (GlcNAc...) asparagine glycan is attached at Asn82. Intrachain disulfides connect Cys100–Cys114 and Cys125–Cys153. Ser129 (charge relay system) is an active-site residue.

Belongs to the peptidase S1 family. As to expression, plasma; synthesized in the liver.

It is found in the secreted. The protein resides in the golgi apparatus. Its subcellular location is the endoplasmic reticulum. It catalyses the reaction Degradation of blood coagulation factors Va and VIIIa.. Its function is as follows. Protein C is a vitamin K-dependent serine protease that regulates blood coagulation by inactivating factors Va and VIIIa in the presence of calcium ions and phospholipids. Exerts a protective effect on the endothelial cell barrier function. The chain is Vitamin K-dependent protein C (PROC) from Macaca mulatta (Rhesus macaque).